Consider the following 86-residue polypeptide: Exodeoxyribonuclease 7 small subunit (86 aa).

This sequence belongs to the XseB family. In terms of assembly, heterooligomer composed of large and small subunits.

The protein resides in the cytoplasm. It carries out the reaction Exonucleolytic cleavage in either 5'- to 3'- or 3'- to 5'-direction to yield nucleoside 5'-phosphates.. Its function is as follows. Bidirectionally degrades single-stranded DNA into large acid-insoluble oligonucleotides, which are then degraded further into small acid-soluble oligonucleotides. The chain is Exodeoxyribonuclease 7 small subunit from Bacillus licheniformis (strain ATCC 14580 / DSM 13 / JCM 2505 / CCUG 7422 / NBRC 12200 / NCIMB 9375 / NCTC 10341 / NRRL NRS-1264 / Gibson 46).